Here is a 132-residue protein sequence, read N- to C-terminus: Small ribosomal subunit protein uS11 (132 aa).

Belongs to the universal ribosomal protein uS11 family. In terms of assembly, part of the 30S ribosomal subunit. Interacts with proteins S7 and S18. Binds to IF-3.

Functionally, located on the platform of the 30S subunit, it bridges several disparate RNA helices of the 16S rRNA. Forms part of the Shine-Dalgarno cleft in the 70S ribosome. This chain is Small ribosomal subunit protein uS11, found in Leifsonia xyli subsp. xyli (strain CTCB07).